A 667-amino-acid polypeptide reads, in one-letter code: Fermitin family homolog 3 (667 aa).

S8 is subject to Phosphoserine. Y11 bears the Phosphotyrosine mark. The FERM domain maps to 229–558; the sequence is WLDSSRCLMQ…SLPDFGISYV (330 aa). Residues 354–457 form the PH domain; that stretch reads DHLRIFRIPR…WMAGCRLASK (104 aa). At Y504 the chain carries Phosphotyrosine. T591 carries the phosphothreonine modification.

It belongs to the kindlin family. In terms of assembly, interacts with ITGB1, ITGB2 and ITGB3 (via cytoplasmic tails). Highly expressed in lymph node. Expressed in thymus, spleen and leukocytes. Weakly expressed in placenta, small intestine, stomach, testis and lung. Overexpressed in B-cell malignancies.

It is found in the cell projection. The protein localises to the podosome. In terms of biological role, plays a central role in cell adhesion in hematopoietic cells. Acts by activating the integrin beta-1-3 (ITGB1, ITGB2 and ITGB3). Required for integrin-mediated platelet adhesion and leukocyte adhesion to endothelial cells. Required for activation of integrin beta-2 (ITGB2) in polymorphonuclear granulocytes (PMNs). Functionally, isoform 2 may act as a repressor of NF-kappa-B and apoptosis. This chain is Fermitin family homolog 3 (FERMT3), found in Homo sapiens (Human).